The following is a 372-amino-acid chain: Adaptive-response sensory kinase SasA (372 aa).

Residues 147–360 (MVAHELRTPL…CFHFTVPVWQ (214 aa)) enclose the Histidine kinase domain. A Phosphohistidine; by autocatalysis modification is found at H150.

Homooligomerizes. Interacts with KaiC. Participates in the KaiBC complex, whose core is composed of a KaiC homohexamer and 6 KaiB.

The enzyme catalyses ATP + protein L-histidine = ADP + protein N-phospho-L-histidine.. Member of the two-component regulatory system SasA/RpaA involved in genome-wide circadian gene expression. One of several clock output pathways. Participates in the Kai clock protein complex, the main circadian regulator in cyanobacteria, via its interaction with KaiC. KaiC enhances the autophosphorylation activity of SasA, which then transfers its phosphate group to RpaA to activate it. In addition to its output function, recruits fold-shifted KaiB (KaiB(fs)) to KaiC to cooperatively form the KaiB(6):KaiC(6) complex (independent of SasA kinase activity). Required for robustness of the circadian rhythm of gene expression and is involved in clock output, also required for adaptation to light/dark cycles. The sequence is that of Adaptive-response sensory kinase SasA from Prochlorococcus marinus (strain AS9601).